A 423-amino-acid polypeptide reads, in one-letter code: Histone deacetylase 14, chloroplastic (423 aa).

Residues 1–44 (MSMALIVRPFFVPGSAGISGSRNICKKNQWRKYLLKPSGSSINC) constitute a chloroplast transit peptide. The segment at 62–392 (DARLIYSVSA…FRALLGEDSL (331 aa)) is histone deacetylase. Histidine 202 serves as the catalytic Proton donor/acceptor. Zn(2+) is bound by residues aspartate 239, histidine 241, and aspartate 326.

Belongs to the histone deacetylase family. Interacts with PP2A2. Requires Zn(2+) as cofactor. In terms of tissue distribution, expressed in stems, leaves, flowers, siliques and mature seeds.

The protein resides in the nucleus. The protein localises to the cytoplasm. It is found in the plastid. It localises to the chloroplast stroma. Its subcellular location is the mitochondrion. The catalysed reaction is N-acetylserotonin + H2O = serotonin + acetate. The enzyme catalyses N-acetyltyramine + H2O = tyramine + acetate. It catalyses the reaction N-acetyltryptamine + H2O = tryptamine + acetate. It carries out the reaction melatonin + H2O = 5-methoxytryptamine + acetate. Its activity is regulated as follows. Its activity is inhibited by trichostatin A (TSA), a known histone deacetylase inhibitor. In terms of biological role, regulates lysine acetylation levels of plastid proteins related to photosynthesis. Involved in the regulation of the activation state of RuBisCO, which is controlled by lysine acetylation of RuBisCO activase under low-light conditions. Associates with alpha- and beta-tubulins and deacetylate alpha-tubulin. Does not seem to be required for the cellular patterning in the root epidermis. Involved in the regulation of melatonin biosynthesis by catalyzing the deacetylation of N-acetylserotonin to produce serotonin. N-acetylserotonin is methylated by acetylserotonin O-methyltransferase (ASMT) to produce melatonin (N-acetyl-5-methoxytryptamine). Deacetylates melatonin to produce 5-methoxytryptamine. In vitro, deacetylates N-acetyltyramine and N-acetyltryptamine to produce tyramine and tryptamine, respectively. In Arabidopsis thaliana (Mouse-ear cress), this protein is Histone deacetylase 14, chloroplastic.